Consider the following 53-residue polypeptide: Bowman-Birk type proteinase inhibitor 1 (53 aa).

5 disulfides stabilise this stretch: cysteine 9/cysteine 24, cysteine 12/cysteine 51, cysteine 14/cysteine 22, cysteine 31/cysteine 38, and cysteine 40/cysteine 48.

In terms of assembly, dimer.

Its function is as follows. Inhibits trypsin (IC(50)=6.20 nM), neutrophil elastase (ELANE) and, to a lesser extent, alpha-chymotrypsin (IC(50)=3.44 uM). This chain is Bowman-Birk type proteinase inhibitor 1, found in Lathyrus sativus (White vetchling).